We begin with the raw amino-acid sequence, 815 residues long: MEVISINNTNCNNINNNIDNTNIDTNSIHNKNNIDNNIDNNNIDNNSIGNNNNNIDNNNNNIANNNINNINNIDNNIDNNNNIDNNNNKNNSNNYNNIDNNNNNNNNNNNNNNNNNNIDNYNLVNNNNNNNNNSEISTPNFPYNNNNLTNLNSDNNIGVQVIFENISYKTENRNYKKQIKDEKKRKKKLEMERSNSSNSNSSYDVESSASGLQTPQQSRSSILPTNSLNISKIDQSMNPQQTRSTTNGKIEKEITILSNVSGIIEKSEMVGLFGPSGSGKSTLLDILANRKSTGTISGKILVNGKEIGDAYKKYCSYVTQDEILLQTSTVEETLKFHADLRLPGLSDQDKWKVVEQVIKDIGLTKKSKSKIGGILPGGMIVKGLSGGEKKRVSIGCALVTNPSLLFLDEPTSGLDSLNALKVMKVLMNLTVIKGVTVICSIHQPRPEIYHLFNKIMIMLKGRMIYCGNDVLNYLSSLPNQYQCPNYTNPADFILDTCHEISECDHYEEICESWETNWRDNMLAVSRIQPFNRSIEPNKSCSLLYQYKILLNRNFKDFFRNSTQYITRLSGGFMIGLLFSACFGTLSPSQEDVLKISGILFFLIAVLNLIPFTCITLFLSNREVFNSERASKIYHSLPFYLSTITTEAFIQFLVSLIVSLLVYTINHLRWNFSSFFITYFILYLINLLSDLYIIAISNITGKSDLTFIYGTTISITFLLFMGHLVPVKQLPKSFGWIHWLNPLYYGYATVMVAQFKDYPLECPNDFCQFPNGNDVLKFYNLEDWTLQKGIGIIILWICFFFVSGYWAISKLNKEKR.

Disordered stretches follow at residues 81-141 (NNID…TPNF) and 177-249 (KQIK…TNGK). The stretch at 164–199 (ENISYKTENRNYKKQIKDEKKRKKKLEMERSNSSNS) forms a coiled coil. Low complexity predominate over residues 194 to 210 (SNSSNSNSSYDVESSAS). Positions 211–248 (GLQTPQQSRSSILPTNSLNISKIDQSMNPQQTRSTTNG) are enriched in polar residues. In terms of domain architecture, ABC transporter spans 242-485 (TRSTTNGKIE…SLPNQYQCPN (244 aa)). Residue 274–281 (GPSGSGKS) participates in ATP binding. The ABC transmembrane type-2 domain occupies 562–810 (TQYITRLSGG…VSGYWAISKL (249 aa)). 7 helical membrane passes run 568–588 (LSGG…LSPS), 598–618 (ILFF…TLFL), 647–667 (AFIQ…INHL), 675–695 (FITY…IIAI), 706–726 (FIYG…LVPV), 732–752 (SFGW…VMVA), and 788–808 (GIGI…WAIS).

This sequence belongs to the ABC transporter superfamily. ABCG family.

It is found in the membrane. The protein is ABC transporter G family member 7 (abcG7) of Dictyostelium discoideum (Social amoeba).